A 222-amino-acid chain; its full sequence is Cytochrome b6 (222 aa).

The chain crosses the membrane as a helical span at residues 39–59 (IFYCLGGITLVCFLVQFATGF). A heme c-binding site is contributed by C42. Heme b contacts are provided by H93 and H107. 3 helical membrane-spanning segments follow: residues 97–117 (ASMM…TGGF), 123–143 (LTWM…VTGY), and 193–213 (LHTF…FLMI). Residues H194 and H209 each coordinate heme b.

This sequence belongs to the cytochrome b family. PetB subfamily. The 4 large subunits of the cytochrome b6-f complex are cytochrome b6, subunit IV (17 kDa polypeptide, PetD), cytochrome f and the Rieske protein, while the 4 small subunits are PetG, PetL, PetM and PetN. The complex functions as a dimer. Heme b serves as cofactor. Requires heme c as cofactor.

Its subcellular location is the cellular thylakoid membrane. Its function is as follows. Component of the cytochrome b6-f complex, which mediates electron transfer between photosystem II (PSII) and photosystem I (PSI), cyclic electron flow around PSI, and state transitions. This Crocosphaera subtropica (strain ATCC 51142 / BH68) (Cyanothece sp. (strain ATCC 51142)) protein is Cytochrome b6.